The chain runs to 372 residues: Peptidyl-prolyl cis-trans isomerase D (372 aa).

The PPIase cyclophilin-type domain occupies 9–175 (FFDISIGGKP…KEVKIEDCGV (167 aa)). 3 TPR repeats span residues 220 to 253 (VEAV…LKQY), 271 to 304 (VSLF…DNTD), and 309 to 342 (AKAL…QPHD).

This sequence belongs to the cyclophilin-type PPIase family. PPIase D subfamily.

The protein resides in the cytoplasm. It catalyses the reaction [protein]-peptidylproline (omega=180) = [protein]-peptidylproline (omega=0). In terms of biological role, PPIases accelerate the folding of proteins. It catalyzes the cis-trans isomerization of proline imidic peptide bonds in oligopeptides. The chain is Peptidyl-prolyl cis-trans isomerase D (CPR6) from Kluyveromyces lactis (strain ATCC 8585 / CBS 2359 / DSM 70799 / NBRC 1267 / NRRL Y-1140 / WM37) (Yeast).